The sequence spans 409 residues: Fructose-1,6-bisphosphatase, chloroplastic (409 aa).

Residues 1–49 (MAAATTTTSRPLLLSRQQAAASSLQCRLPRRPGSSLFAGQGQASTPNVR) constitute a chloroplast transit peptide. Residues E131, E160, D181, L183, and D184 each contribute to the Mg(2+) site. 184 to 187 (DGSS) lines the substrate pocket. C223 and C228 are disulfide-bonded. Residues N287, Y319, Y337, Y339, and K349 each contribute to the substrate site. E355 provides a ligand contact to Mg(2+).

This sequence belongs to the FBPase class 1 family. Homotetramer. Mg(2+) is required as a cofactor. As to expression, in photosynthetically active tissues, and in the shoot and root apical meristems.

It is found in the plastid. It localises to the chloroplast. The enzyme catalyses beta-D-fructose 1,6-bisphosphate + H2O = beta-D-fructose 6-phosphate + phosphate. It functions in the pathway carbohydrate biosynthesis; Calvin cycle. The chain is Fructose-1,6-bisphosphatase, chloroplastic (FBP) from Triticum aestivum (Wheat).